Consider the following 391-residue polypeptide: Dual-specificity RNA methyltransferase RlmN (391 aa).

Residue Glu-115 is the Proton acceptor of the active site. A Radical SAM core domain is found at 121–363; the sequence is EENRGTLCIS…SPIRTPRGED (243 aa). An intrachain disulfide couples Cys-128 to Cys-368. [4Fe-4S] cluster is bound by residues Cys-135, Cys-139, and Cys-142. S-adenosyl-L-methionine-binding positions include 194 to 195, Ser-226, 248 to 250, and Asn-325; these read GE and SFH. Cys-368 serves as the catalytic S-methylcysteine intermediate.

The protein belongs to the radical SAM superfamily. RlmN family. It depends on [4Fe-4S] cluster as a cofactor.

It is found in the cytoplasm. It carries out the reaction adenosine(2503) in 23S rRNA + 2 reduced [2Fe-2S]-[ferredoxin] + 2 S-adenosyl-L-methionine = 2-methyladenosine(2503) in 23S rRNA + 5'-deoxyadenosine + L-methionine + 2 oxidized [2Fe-2S]-[ferredoxin] + S-adenosyl-L-homocysteine. The enzyme catalyses adenosine(37) in tRNA + 2 reduced [2Fe-2S]-[ferredoxin] + 2 S-adenosyl-L-methionine = 2-methyladenosine(37) in tRNA + 5'-deoxyadenosine + L-methionine + 2 oxidized [2Fe-2S]-[ferredoxin] + S-adenosyl-L-homocysteine. In terms of biological role, specifically methylates position 2 of adenine 2503 in 23S rRNA and position 2 of adenine 37 in tRNAs. m2A2503 modification seems to play a crucial role in the proofreading step occurring at the peptidyl transferase center and thus would serve to optimize ribosomal fidelity. The chain is Dual-specificity RNA methyltransferase RlmN from Paracoccus denitrificans (strain Pd 1222).